A 119-amino-acid chain; its full sequence is Circadian clock oscillator protein KaiB (119 aa).

It belongs to the KaiB family. In terms of assembly, the KaiABC complex composition changes during the circadian cycle to control KaiC phosphorylation. Complexes KaiC(6), KaiA(2-4):KaiC(6), KaiB(6):KaiC(6) and KaiC(6):KaiB(6):KaiA(12) are among the most important forms, many form cooperatively. Undergoes a major conformational rearrangment; in the free state forms homotetramers as a dimer of dimers. When bound to the CI domain of KaiC switches to a monomeric thioredoxin-fold (KaiB(fs)). KaiB(fs) binds CikA, leading it to dephosphorylate phospho-RpaA.

Functionally, key component of the KaiABC oscillator complex, which constitutes the main circadian regulator in cyanobacteria. Complex composition changes during the circadian cycle to control KaiC phosphorylation. KaiA stimulates KaiC autophosphorylation, while KaiB sequesters KaiA, leading to KaiC autodephosphorylation. Phospho-Ser-431 KaiC accumulation triggers binding of KaiB to form the KaiB(6):KaiC(6) complex, leading to changes in output regulators CikA and SasA. KaiB switches to a thioredoxin-like fold (KaiB(fs)) when bound to KaiC. KaiB(6):KaiC(6) formation exposes a site for KaiA binding that sequesters KaiA from KaiC, making the KaiC(6):KaiB(6):KaiA(12) complex that results in KaiC autodephosphorylation. Its function is as follows. A metamorphic protein which reversibly switches between an inactive tetrameric fold and a rare, thioredoxin-like monomeric fold (KaiB(fs)). KaiB(fs) binds phospho-KaiC, KaiA and CikA. KaiA and CikA compete for binding to KaiB(fs), and KaiB(fs) and SasA compete for binding to KaiC, thus the clock oscillator and output signal pathway are tightly coupled. In Synechococcus sp. (strain CC9311), this protein is Circadian clock oscillator protein KaiB.